Consider the following 360-residue polypeptide: MEKVFNFCAGPAMLPVDVLAQAQKELVNWNGLGTSVMEISHRSKEFIKVAEESEQDLRDLLAIPDNYKVLFCQGGARAQFAAVPLNLLGGNTKADYVDAGYWAQSAVEEAQKYCTPNVINTIIDVDGKKAVQPASEWALSDDAVYVHFCPNETIDGIEINDLPVTDKPIVADMSSTILSRKIDVSKYGVIYAGAQKNIGPAGLTIVIVRDDLLDLASQTLPSVLNYGVLADKESMFNTPPTYAWYLAGLVFKWLKSNGGIDAMETHNRKKAAVLYDYIDQSDFYRNDVHSDNRSLMNVPFQLANPELDTKFLELADEAGLKALKGHRVVGGMRASIYNAMPLEGVEALVQFMKEFEEKYV.

Arg-42 is an L-glutamate binding site. Pyridoxal 5'-phosphate contacts are provided by residues 76–77 (AR), Trp-102, Thr-153, Asp-172, and Gln-195. N6-(pyridoxal phosphate)lysine is present on Lys-196. 237 to 238 (NT) contributes to the pyridoxal 5'-phosphate binding site.

It belongs to the class-V pyridoxal-phosphate-dependent aminotransferase family. SerC subfamily. As to quaternary structure, homodimer. Pyridoxal 5'-phosphate serves as cofactor.

It localises to the cytoplasm. It catalyses the reaction O-phospho-L-serine + 2-oxoglutarate = 3-phosphooxypyruvate + L-glutamate. The enzyme catalyses 4-(phosphooxy)-L-threonine + 2-oxoglutarate = (R)-3-hydroxy-2-oxo-4-phosphooxybutanoate + L-glutamate. Its pathway is amino-acid biosynthesis; L-serine biosynthesis; L-serine from 3-phospho-D-glycerate: step 2/3. It functions in the pathway cofactor biosynthesis; pyridoxine 5'-phosphate biosynthesis; pyridoxine 5'-phosphate from D-erythrose 4-phosphate: step 3/5. Functionally, catalyzes the reversible conversion of 3-phosphohydroxypyruvate to phosphoserine and of 3-hydroxy-2-oxo-4-phosphonooxybutanoate to phosphohydroxythreonine. The polypeptide is Phosphoserine aminotransferase (Aliivibrio fischeri (strain ATCC 700601 / ES114) (Vibrio fischeri)).